A 477-amino-acid chain; its full sequence is Trigger factor (477 aa).

The 88-residue stretch at 174-261 (GDIAVVSFKG…LKDLKEKELP (88 aa)) folds into the PPIase FKBP-type domain. The tract at residues 435 to 477 (VNEKTTKTSKATKTSKTTKATKTATKTTKTTKTTKTQNKKEKK) is disordered. Positions 442–470 (TSKATKTSKTTKATKTATKTTKTTKTTKT) are enriched in low complexity.

It belongs to the FKBP-type PPIase family. Tig subfamily.

The protein resides in the cytoplasm. The catalysed reaction is [protein]-peptidylproline (omega=180) = [protein]-peptidylproline (omega=0). Its function is as follows. Involved in protein export. Acts as a chaperone by maintaining the newly synthesized protein in an open conformation. Functions as a peptidyl-prolyl cis-trans isomerase. The sequence is that of Trigger factor from Prochlorococcus marinus (strain MIT 9301).